We begin with the raw amino-acid sequence, 404 residues long: MMLSRDLRAEAAVRLWIMFLLLEDLLGACAVGDYQRRVPSAPNTDIRNTLEKPRVTTQEVAGPHTLRYDLMALSLKLPELPQVLIWRYFDDEPFLHYNESSNRTDSWEPRIKRHWRAMTWARETEDLQEMVEQLKRMLAEVTGQKGQDKGLHILQATLGCELQRNGSTRGFWHLGYDGRNLLTFDQKTLTWTMDMPFTQQKKTFWEPRAPRADLVKTFLDDTCPAQLQRHLASLRSEPLDTGSPMVIVTFRNYPLGRVTLTCRAFNLYPHMATRGTLAWLQDRKLVKQKAFEPGTILPSGDRTYQIWVSIWVLPGQEPQFTCNLSYHGGNIEKRAVIVNTVSGEKTRQPSTSGVGGRVKKSLWTTMTTAFMVTSWTRKTGGDSTLLLLWWLLFFSTVLAVLTLV.

Residues 1–30 (MMLSRDLRAEAAVRLWIMFLLLEDLLGACA) form the signal peptide. The interval 59–150 (EVAGPHTLRY…VTGQKGQDKG (92 aa)) is alpha-1. N98, N102, and N165 each carry an N-linked (GlcNAc...) asparagine glycan. The alpha-2 stretch occupies residues 151–242 (LHILQATLGC…SLRSEPLDTG (92 aa)). Cystine bridges form between C160–C223 and C262–C322. The region spanning 224–338 (PAQLQRHLAS…GNIEKRAVIV (115 aa)) is the Ig-like C1-type domain. Residues 243–342 (SPMVIVTFRN…KRAVIVNTVS (100 aa)) are alpha-3. The N-linked (GlcNAc...) asparagine glycan is linked to N323. The tract at residues 343–373 (GEKTRQPSTSGVGGRVKKSLWTTMTTAFMVT) is connecting peptide. The GPI-anchor amidated serine moiety is linked to residue S374. Positions 375 to 404 (WTRKTGGDSTLLLLWWLLFFSTVLAVLTLV) are cleaved as a propeptide — removed in mature form.

Belongs to the MHC class I family. As to quaternary structure, heterodimer with B2M. Detected in skin, esophagus, tongue, skin, muscle, uterus, ovary, testis and epididymis.

It localises to the cell membrane. This chain is MHC class I-like protein MILL1, found in Rattus norvegicus (Rat).